The following is a 297-amino-acid chain: DNA processing protein DprA (297 aa).

This sequence belongs to the DprA/Smf family. As to quaternary structure, interacts with RecA. Interacts with ComFA and ComFC.

The protein resides in the cytoplasm. Its function is as follows. Protein that helps load RecA onto ssDNA during transformation. Binds cooperatively to circular ssDNA, is able to bridge different segments of DNA. Favors the loading of RecA onto SsbA- or SsbB-coated ssDNA and formation of RecA-DNA filaments. RecA-ATP cannot catalyze homologous DNA strand exchange; SsbA and DprA activate strand exchange by RecA-ATP. The polypeptide is DNA processing protein DprA (Bacillus subtilis (strain 168)).